Consider the following 340-residue polypeptide: Uridine nucleosidase (340 aa).

The active site involves His-254.

This sequence belongs to the IUNH family.

The protein localises to the cytoplasm. The protein resides in the nucleus. It carries out the reaction uridine + H2O = D-ribose + uracil. Also acts on cytidine. The chain is Uridine nucleosidase (URH1) from Saccharomyces cerevisiae (strain ATCC 204508 / S288c) (Baker's yeast).